Here is a 119-residue protein sequence, read N- to C-terminus: DNA-binding protein inhibitor ID-3 (119 aa).

In terms of domain architecture, bHLH spans Arg28–Leu80.

Homodimer, and heterodimer with other HLH proteins. Interacts with COPS5 and COPS7A. Interacts with IFI204. Interacts with GATA4 and NKX2-5. Interacts with ANKRD2; both proteins cooperate in myoblast differentiation. Interacts with CLOCK and BMAL1. Phosphorylated in vitro by CDC2 and PKC.

Its subcellular location is the nucleus. Transcriptional regulator (lacking a basic DNA binding domain) which negatively regulates the basic helix-loop-helix (bHLH) transcription factors by forming heterodimers and inhibiting their DNA binding and transcriptional activity. Implicated in regulating a variety of cellular processes, including cellular growth, senescence, differentiation, apoptosis, angiogenesis, and neoplastic transformation. Involved in myogenesis by inhibiting skeletal muscle and cardiac myocyte differentiation and promoting muscle precursor cells proliferation. Inhibits the binding of E2A-containing protein complexes to muscle creatine kinase E-box enhancer. Regulates the circadian clock by repressing the transcriptional activator activity of the CLOCK-BMAL1 heterodimer. This is DNA-binding protein inhibitor ID-3 (Id3) from Rattus norvegicus (Rat).